The primary structure comprises 534 residues: Peptide chain release factor 3 (534 aa).

Residues 9–278 form the tr-type G domain; sequence ARRRTFAIIS…FFVEHAPPPQ (270 aa). GTP-binding positions include 18-25, 86-90, and 140-143; these read SHPDAGKT, DTPGH, and NKLD.

The protein belongs to the TRAFAC class translation factor GTPase superfamily. Classic translation factor GTPase family. PrfC subfamily.

It is found in the cytoplasm. In terms of biological role, increases the formation of ribosomal termination complexes and stimulates activities of RF-1 and RF-2. It binds guanine nucleotides and has strong preference for UGA stop codons. It may interact directly with the ribosome. The stimulation of RF-1 and RF-2 is significantly reduced by GTP and GDP, but not by GMP. The polypeptide is Peptide chain release factor 3 (Xanthomonas campestris pv. campestris (strain 8004)).